A 499-amino-acid chain; its full sequence is Ribose import ATP-binding protein RbsA (499 aa).

ABC transporter domains lie at 3–240 (VEMS…VGRE) and 250–494 (LEPG…TGGD). Position 35-42 (35-42 (GENGAGKS)) interacts with ATP.

The protein belongs to the ABC transporter superfamily. Ribose importer (TC 3.A.1.2.1) family. In terms of assembly, the complex is composed of an ATP-binding protein (RbsA), two transmembrane proteins (RbsC) and a solute-binding protein (RbsB).

Its subcellular location is the cell membrane. It carries out the reaction D-ribose(out) + ATP + H2O = D-ribose(in) + ADP + phosphate + H(+). Part of the ABC transporter complex RbsABC involved in ribose import. Responsible for energy coupling to the transport system. The protein is Ribose import ATP-binding protein RbsA of Shouchella clausii (strain KSM-K16) (Alkalihalobacillus clausii).